Reading from the N-terminus, the 102-residue chain is Antimicrobial peptide 1 (102 aa).

Positions Met1–Gly26 are cleaved as a signal peptide. Intrachain disulfides connect Cys37/Cys90, Cys47/Cys102, and Cys49/Cys75.

The protein resides in the secreted. In terms of biological role, antimicrobial peptide which inhibits the growth of a variety of fungi, oomycetes, Gram-positive bacterial phytopatogenes and S.cerevisiae in vitro. No activity against E.coli. The chain is Antimicrobial peptide 1 from Macadamia integrifolia (Macadamia nut).